The primary structure comprises 613 residues: YTH domain-containing family protein 2 (613 aa).

3 disordered regions span residues 1–43 (MSAS…AQPR), 215–234 (SQVSTAPTMPPASMAPAKTA), and 244–396 (AKPQ…TVPA). The segment at 2-397 (SASSLLEQRP…GMGGITVPAE (396 aa)) is localization to mRNA processing bodies (P-bodies). Residues 16–27 (NKVQNGAVTQKD) are compositionally biased toward polar residues. Low complexity-rich tracts occupy residues 218–234 (STAPTMPPASMAPAKTA), 295–307 (NGQPPNQSSPQPG), and 345–360 (PPQLSQGPPASQPSQP). The interaction with m6A-containing mRNAs stretch occupies residues 398 to 613 (PHPVLEKLRM…RMQDRQGRVK (216 aa)). One can recognise a YTH domain in the interval 423-557 (GRVFIIKSYS…DKARQVLKII (135 aa)). Residues 429–431 (KSY), Asp435, 445–446 (WC), Asn475, Trp499, and Trp504 each bind RNA. Basic and acidic residues-rich tracts occupy residues 578-587 (EEEESVKKVE) and 604-613 (RMQDRQGRVK). The interval 578 to 613 (EEEESVKKVEVQGSDPYSNNSSRSHYRMQDRQGRVK) is disordered.

The protein belongs to the YTHDF family. YTHDF2 subfamily.

It is found in the cytoplasm. The protein resides in the cytosol. Its subcellular location is the P-body. The protein localises to the stress granule. It localises to the nucleus. Specifically recognizes and binds N6-methyladenosine (m6A)-containing RNAs, and regulates their stability. M6A is a modification present at internal sites of mRNAs and some non-coding RNAs and plays a role in mRNA stability and processing. Acts as a regulator of mRNA stability by promoting degradation of m6A-containing mRNAs. The YTHDF paralogs (ythdf1, ythdf2 and ythdf3) share m6A-containing mRNAs targets and act redundantly to mediate mRNA degradation and cellular differentiation. Plays a key role in maternal-to-zygotic transition during early embryonic development, the process during which maternally inherited mRNAs are degraded: acts by binding m6A-containing maternal mRNAs and promoting their degradation. More than one-third of maternal mRNAs can be modified by m6A. Binding to m6A-containing mRNAs results in mRNA degradation. Also involved in hematopoietic stem cells specification by binding to m6A-containing mRNAs, such as notch1a, and promote their degradation. The decreased Notch signaling following notch1a degradation promotes endothelial to hematopoietic transition. Promotes formation of phase-separated membraneless compartments, such as P-bodies or stress granules, by undergoing liquid-liquid phase separation upon binding to mRNAs containing multiple m6A-modified residues: polymethylated mRNAs act as a multivalent scaffold for the binding of YTHDF proteins, juxtaposing their disordered regions and thereby leading to phase separation. The resulting mRNA-YTHDF complexes then partition into different endogenous phase-separated membraneless compartments, such as P-bodies, stress granules or neuronal RNA granules. In Danio rerio (Zebrafish), this protein is YTH domain-containing family protein 2.